The primary structure comprises 208 residues: Troponin I, cardiac muscle (208 aa).

Disordered stretches follow at residues 1 to 37 (MAEEEEPKPPPLRRKSSANYRGYAVEPHAKRQSKISA), 54 to 74 (DLEREEQERAGEKQRHLGELC), and 168 to 208 (VRKD…GGQS). Ala-2 is modified (N-acetylalanine). Residues 28 to 73 (HAKRQSKISASRKLQLKTLLLQRAKRDLEREEQERAGEKQRHLGEL) form an involved in binding TNC region. Composition is skewed to basic and acidic residues over residues 54–71 (DLEREEQERAGEKQRHLG) and 168–187 (VRKDEAEKESREVGDWRKNV).

The protein belongs to the troponin I family. In terms of assembly, binds to actin and tropomyosin.

Its function is as follows. Troponin I is the inhibitory subunit of troponin, the thin filament regulatory complex which confers calcium-sensitivity to striated muscle actomyosin ATPase activity. This is Troponin I, cardiac muscle (TNNI3) from Coturnix japonica (Japanese quail).